The sequence spans 170 residues: Peptide deformylase (170 aa).

Fe cation-binding residues include cysteine 92 and histidine 134. Glutamate 135 is a catalytic residue. Histidine 138 provides a ligand contact to Fe cation.

This sequence belongs to the polypeptide deformylase family. Requires Fe(2+) as cofactor.

The catalysed reaction is N-terminal N-formyl-L-methionyl-[peptide] + H2O = N-terminal L-methionyl-[peptide] + formate. Removes the formyl group from the N-terminal Met of newly synthesized proteins. Requires at least a dipeptide for an efficient rate of reaction. N-terminal L-methionine is a prerequisite for activity but the enzyme has broad specificity at other positions. The polypeptide is Peptide deformylase (Chromohalobacter salexigens (strain ATCC BAA-138 / DSM 3043 / CIP 106854 / NCIMB 13768 / 1H11)).